The primary structure comprises 249 residues: 2,3-bisphosphoglycerate-dependent phosphoglycerate mutase (249 aa).

Substrate contacts are provided by residues 9-16, 22-23, Arg-61, 88-91, Lys-99, 115-116, and 184-185; these read RHGESEWN, TG, ERHY, RR, and GN. His-10 acts as the Tele-phosphohistidine intermediate in catalysis. The Proton donor/acceptor role is filled by Glu-88.

This sequence belongs to the phosphoglycerate mutase family. BPG-dependent PGAM subfamily.

It catalyses the reaction (2R)-2-phosphoglycerate = (2R)-3-phosphoglycerate. The protein operates within carbohydrate degradation; glycolysis; pyruvate from D-glyceraldehyde 3-phosphate: step 3/5. In terms of biological role, catalyzes the interconversion of 2-phosphoglycerate and 3-phosphoglycerate. This Cutibacterium acnes (strain DSM 16379 / KPA171202) (Propionibacterium acnes) protein is 2,3-bisphosphoglycerate-dependent phosphoglycerate mutase.